A 275-amino-acid polypeptide reads, in one-letter code: Ciliary microtubule inner protein 2B (275 aa).

Disordered regions lie at residues 62-84 (PPIRPPRSPEVPRESLPVRRGQE) and 125-169 (EKQG…SPYS). Basic and acidic residues-rich tracts occupy residues 71-84 (EVPRESLPVRRGQE) and 125-147 (EKQGSEELPKEAKGRKDTEKDQV).

Belongs to the CIMIP2 family. As to quaternary structure, microtubule inner protein component of sperm flagellar doublet microtubules. As to expression, expressed in airway epithelial cells.

Its subcellular location is the cytoplasm. It localises to the cytoskeleton. The protein resides in the cilium axoneme. It is found in the flagellum axoneme. Its function is as follows. Microtubule inner protein (MIP) part of the dynein-decorated doublet microtubules (DMTs) in cilia axoneme, which is required for motile cilia beating. The protein is Ciliary microtubule inner protein 2B of Homo sapiens (Human).